Consider the following 293-residue polypeptide: MAAITISSSLHASASPRVVRPHVSRNTPVITLYSRFTPSFSFPSLSFTLRDTAPSRRRSFFIASAVKSLTETELLPITEADSIPSASGVYAVYDKSDELQFVGISRNIAASVSAHLKSVPELCGSVKVGIVEEPDKAVLTQAWKLWIEEHIKVTGKVPPGNKSGNNTFVKQTPRKKSDIRLTPGRHVELTVPLEELIDRLVKESKVVAFIKGSRSAPQCGFSQRVVGILESQGVDYETVDVLDDEYNHGLRETLKNYSNWPTFPQIFVKGELVGGCDILTSMYENGELANILN.

A chloroplast-targeting transit peptide spans 1–62 (MAAITISSSL…APSRRRSFFI (62 aa)). C123 and C219 are oxidised to a cystine. Residues 194–293 (EELIDRLVKE…ENGELANILN (100 aa)) form the Glutaredoxin domain. Position 211 (K211) interacts with glutathione. C219 is a binding site for [2Fe-2S] cluster. Residues R251, F263, and 276–277 (CD) each bind glutathione.

Belongs to the glutaredoxin family. CGFS subfamily. As to quaternary structure, [2Fe-2S]-bridged holo-homodimer. Interacts in vitro with SUFE1, BOLA1, BOLA2 and BOLA4. Interacts in vivo only with SUFE1, BOLA1 and BOLA4. Interacts with SBP1.

The protein localises to the plastid. Its subcellular location is the chloroplast. The formation of an intramolecular disulfide bond negatively regulates both the N-terminal endonuclease and the C-terminal glutaredoxin activities. Functionally, may only reduce GSH-thiol disulfides, but not protein disulfides. Participates probably to the maturation of iron-sulfur proteins and to the regulation of the redox state of the BOLA proteins. The GRXS16-BOLA1 heterodimer binds a labile, oxygen sensitive iron-sulfur cluster. Able to cleave linearized DNA in vitro. The polypeptide is Bifunctional monothiol glutaredoxin-S16, chloroplastic (Arabidopsis thaliana (Mouse-ear cress)).